We begin with the raw amino-acid sequence, 196 residues long: Probable splicing factor, arginine/serine-rich 4 (196 aa).

Residues 19–97 enclose the RRM domain; that stretch reads TSLKIDNLSY…RELRVTLAKY (79 aa). Residues 91–106 are compositionally biased toward basic and acidic residues; the sequence is RVTLAKYDRPSDERGG. The interval 91–196 is disordered; sequence RVTLAKYDRP…SPSRSRSNSR (106 aa). A compositionally biased stretch (basic residues) spans 112–141; it reads GRRRSRSPRRRSRSPRYSRSRSPRRSRSRT. 2 stretches are compositionally biased toward basic and acidic residues: residues 145–160 and 167–176; these read PSRD…DNSR and PPREDGSPKE. Low complexity predominate over residues 184 to 196; it reads ASRSPSRSRSNSR.

Belongs to the splicing factor SR family. Extensively phosphorylated on serine residues in the RS domain.

The protein localises to the nucleus. Its function is as follows. May play a functionally redundant role in embryogenesis. The polypeptide is Probable splicing factor, arginine/serine-rich 4 (rsp-4) (Caenorhabditis elegans).